The primary structure comprises 388 residues: MVTVGEVRKAQRAEGPATILAIGTATPANCVNQSTYPDYYFRITNSEHKTELKEKFQRMCDKSMITKRYMHLTEEILKENPSFCEYMAPSLDARQDIAVVEVPKLGKEAAQSAIKGWGQPKSKITHVVFCTTSGVDMPGADYQLTKLLGLRPSVKRLMMYQQGCFAGGTVLRLAKDLAENNKGARVLIVCSEITVVTFRGPSEAHLDSLVGQALFGDGAAAVIVGADPTPAEKPLFQLVSAAQTLAPDSCGAIDGHLREVGLTFHLLKDVPSVVSNNIEKCLFEAFNPLGISDWNSVFWIAHPGGPAILDQVEDKLGLKPEKLRATRHVLSEYGNMSSACVLFILDEMRKASSNDGLGTTGEGLEWGVLFGFGPGLTIETVVLHSVPT.

The active site involves cysteine 164.

Belongs to the thiolase-like superfamily. Chalcone/stilbene synthases family.

The catalysed reaction is (E)-4-coumaroyl-CoA + 3 malonyl-CoA + 3 H(+) = 2',4,4',6'-tetrahydroxychalcone + 3 CO2 + 4 CoA. It participates in secondary metabolite biosynthesis; flavonoid biosynthesis. The primary product of this enzyme is 4,2',4',6'-tetrahydroxychalcone (also termed naringenin-chalcone or chalcone) which can under specific conditions spontaneously isomerize into naringenin. This chain is Chalcone synthase LF3 (CHS-LF3), found in Ipomoea batatas (Sweet potato).